We begin with the raw amino-acid sequence, 617 residues long: MKQSKMPIPTLREMPSDAQVISHALMLRAGYVRQVSAGVYSYLPLANRVIEKAKNIMRQEFEKIGAVEMLAPALLSAELWRESGRYETYGEDLYKLKNREKSDFILGPTHEETFTAIVRDSVKSYKQLPLNLYQIQPKYRDEKRPRNGLLRTREFIMKDAYSFHANYDSLDSVYDEYKAAYERIFTRSGLDFKAIIGDGGAMGGKDSQEFMAITSARTDLDRWVVLDKSVASFDEIPAEVQEEIKAELLKWIVSGEDTIAYSSESSYAANLEMATNEYKPSNRVVAEEEVTRVATPDVKSIDEVAAFLNVPEEQTIKTLFYIADGELVAALLVGNDQLNEVKLKNHLGADFFDVASEEEVANVVQAGFGSLGPVGLPENIKIIADRKVQDVRNAVVGANEDGYHLTGVNPGRDFTAEYVDIREVREGEISPDGQGVLNFARGIEIGHIFKLGTRYSASMGADVLDENGRAVPIIMGCYGIGVSRLLSAVMEQHARLFVNKTPKGEYRYAWGINFPKELAPFDVHLITVNVKDEEAQALTEKLEASLMGAGYEVLTDDRNERVGVKFSDSDLIGLPIRITVGKKAADGIVEVKIKATGDTIEVHADNVLETLEILSKK.

It belongs to the class-II aminoacyl-tRNA synthetase family. ProS type 1 subfamily. As to quaternary structure, homodimer.

Its subcellular location is the cytoplasm. The catalysed reaction is tRNA(Pro) + L-proline + ATP = L-prolyl-tRNA(Pro) + AMP + diphosphate. Catalyzes the attachment of proline to tRNA(Pro) in a two-step reaction: proline is first activated by ATP to form Pro-AMP and then transferred to the acceptor end of tRNA(Pro). As ProRS can inadvertently accommodate and process non-cognate amino acids such as alanine and cysteine, to avoid such errors it has two additional distinct editing activities against alanine. One activity is designated as 'pretransfer' editing and involves the tRNA(Pro)-independent hydrolysis of activated Ala-AMP. The other activity is designated 'posttransfer' editing and involves deacylation of mischarged Ala-tRNA(Pro). The misacylated Cys-tRNA(Pro) is not edited by ProRS. The sequence is that of Proline--tRNA ligase from Streptococcus pneumoniae (strain Hungary19A-6).